The following is a 459-amino-acid chain: D(1)-like dopamine receptor (459 aa).

The Extracellular segment spans residues 1–23 (MAQNFSTVGDGKQMLLERDSSKR). N-linked (GlcNAc...) asparagine glycosylation is present at Asn4. Residues 24–49 (VLTGCFLSLLIFTTLLGNTLVCVAVT) form a helical membrane-spanning segment. Residues 50-60 (KFRHLRSKVTN) lie on the Cytoplasmic side of the membrane. A helical transmembrane segment spans residues 61-87 (FFVISLAISDLLVAILVMPWKAATEIM). The Extracellular segment spans residues 88–96 (GFWPFGEFC). Residues Cys96 and Cys187 are joined by a disulfide bond. Residues 97-119 (NIWVAFDIMCSTASILNLCVISV) form a helical membrane-spanning segment. At 120–138 (DRYWAISSPFRYERKMTPK) the chain is on the cytoplasmic side. Residues 139–164 (VACLMISVAWTLSVLISFIPVQLNWH) form a helical membrane-spanning segment. Topologically, residues 165–191 (KAQTASYVELNGTYAGDLPPDNCDSSL) are extracellular. The chain crosses the membrane as a helical span at residues 192–216 (NRTYAISSSLISFYIPVAIMIVTYT). The Cytoplasmic segment spans residues 217 to 269 (RIYRIAQKQIRRISALERAAESAQNRHSSMGNSLSMESECSFKMSFKRETKVL). A helical membrane pass occupies residues 270–297 (KTLSVIMGVFVCCWLPFFILNCMVPFCE). The Extracellular portion of the chain corresponds to 298–311 (ADDTTDFPCISSTT). Residues 312–333 (FDVFVWFGWANSSLNPIIYAFN) traverse the membrane as a helical segment. Topologically, residues 334-459 (ADFRKAFSIL…QNGQHKSMSC (126 aa)) are cytoplasmic.

Belongs to the G-protein coupled receptor 1 family.

The protein localises to the cell membrane. It is found in the cell projection. Its subcellular location is the cilium membrane. In terms of biological role, receptor for dopamine. The sequence is that of D(1)-like dopamine receptor (d14) from Takifugu rubripes (Japanese pufferfish).